Here is a 134-residue protein sequence, read N- to C-terminus: Small ribosomal subunit protein uS11 (134 aa).

Residues 1 to 21 (MPPKSRQGAGRKVRRKEKKNV) form a disordered region. Basic residues predominate over residues 9–21 (AGRKVRRKEKKNV).

Belongs to the universal ribosomal protein uS11 family. Part of the 30S ribosomal subunit. Interacts with proteins S7 and S18. Binds to IF-3.

Functionally, located on the platform of the 30S subunit, it bridges several disparate RNA helices of the 16S rRNA. Forms part of the Shine-Dalgarno cleft in the 70S ribosome. This Thermobifida fusca (strain YX) protein is Small ribosomal subunit protein uS11.